The sequence spans 414 residues: Serine/threonine transporter SstT (414 aa).

Transmembrane regions (helical) follow at residues 16-36, 46-66, 84-104, 143-163, 180-200, 219-239, 300-320, and 332-352; these read GSLV…AWIS, LGTL…LMLV, ILFL…VFSF, ALLN…GFAL, AVTF…FGLV, LVVL…LLVF, MAGA…TLGV, and VVAS…LLLI.

It belongs to the dicarboxylate/amino acid:cation symporter (DAACS) (TC 2.A.23) family.

Its subcellular location is the cell inner membrane. The enzyme catalyses L-serine(in) + Na(+)(in) = L-serine(out) + Na(+)(out). It carries out the reaction L-threonine(in) + Na(+)(in) = L-threonine(out) + Na(+)(out). Involved in the import of serine and threonine into the cell, with the concomitant import of sodium (symport system). This Salmonella heidelberg (strain SL476) protein is Serine/threonine transporter SstT.